Reading from the N-terminus, the 220-residue chain is Large ribosomal subunit protein uL1 (220 aa).

This sequence belongs to the universal ribosomal protein uL1 family. As to quaternary structure, part of the 50S ribosomal subunit.

In terms of biological role, binds directly to 23S rRNA. The L1 stalk is quite mobile in the ribosome, and is involved in E site tRNA release. Its function is as follows. Protein L1 is also a translational repressor protein, it controls the translation of the L11 operon by binding to its mRNA. The sequence is that of Large ribosomal subunit protein uL1 from Ehrlichia ruminantium (strain Gardel).